The sequence spans 610 residues: tRNA uridine 5-carboxymethylaminomethyl modification enzyme MnmG (610 aa).

Gly-14 to Gly-19 provides a ligand contact to FAD. Residue Gly-274–Phe-288 participates in NAD(+) binding.

It belongs to the MnmG family. In terms of assembly, homodimer. Heterotetramer of two MnmE and two MnmG subunits. FAD is required as a cofactor.

It is found in the cytoplasm. In terms of biological role, NAD-binding protein involved in the addition of a carboxymethylaminomethyl (cmnm) group at the wobble position (U34) of certain tRNAs, forming tRNA-cmnm(5)s(2)U34. This Chlamydia trachomatis serovar D (strain ATCC VR-885 / DSM 19411 / UW-3/Cx) protein is tRNA uridine 5-carboxymethylaminomethyl modification enzyme MnmG.